A 144-amino-acid polypeptide reads, in one-letter code: Large ribosomal subunit protein uL15 (144 aa).

The segment at 1–52 is disordered; that stretch reads MYLNTISPMKKSNHSSKRKGRGIGSGKGKTSGRGHKGQRSRSGGKVRRGFEG. Composition is skewed to basic residues over residues 11 to 21 and 30 to 47; these read KSNHSSKRKGR and TSGR…GKVR.

Belongs to the universal ribosomal protein uL15 family. As to quaternary structure, part of the 50S ribosomal subunit.

Functionally, binds to the 23S rRNA. The protein is Large ribosomal subunit protein uL15 of Wigglesworthia glossinidia brevipalpis.